A 668-amino-acid polypeptide reads, in one-letter code: Methionine--tRNA ligase (668 aa).

Residues 11–21 (AYTNGPLHIGH) carry the 'HIGH' region motif. Cysteine 146, cysteine 149, cysteine 159, and cysteine 162 together coordinate Zn(2+). The short motif at 332–336 (KMSTS) is the 'KMSKS' region element. An ATP-binding site is contributed by threonine 335. One can recognise a tRNA-binding domain in the interval 567 to 668 (EFNRLDLRVG…REVEPGERIR (102 aa)).

The protein belongs to the class-I aminoacyl-tRNA synthetase family. MetG type 1 subfamily. As to quaternary structure, homodimer. It depends on Zn(2+) as a cofactor.

The protein resides in the cytoplasm. The enzyme catalyses tRNA(Met) + L-methionine + ATP = L-methionyl-tRNA(Met) + AMP + diphosphate. Functionally, is required not only for elongation of protein synthesis but also for the initiation of all mRNA translation through initiator tRNA(fMet) aminoacylation. In Methanopyrus kandleri (strain AV19 / DSM 6324 / JCM 9639 / NBRC 100938), this protein is Methionine--tRNA ligase.